Consider the following 309-residue polypeptide: tRNA dimethylallyltransferase (309 aa).

15–22 contacts ATP; the sequence is GPTASGKS. 17 to 22 provides a ligand contact to substrate; sequence TASGKS. Positions 40 to 43 are interaction with substrate tRNA; it reads DSRQ.

It belongs to the IPP transferase family. Monomer. Mg(2+) is required as a cofactor.

It carries out the reaction adenosine(37) in tRNA + dimethylallyl diphosphate = N(6)-dimethylallyladenosine(37) in tRNA + diphosphate. Functionally, catalyzes the transfer of a dimethylallyl group onto the adenine at position 37 in tRNAs that read codons beginning with uridine, leading to the formation of N6-(dimethylallyl)adenosine (i(6)A). This is tRNA dimethylallyltransferase from Chlorobium phaeovibrioides (strain DSM 265 / 1930) (Prosthecochloris vibrioformis (strain DSM 265)).